We begin with the raw amino-acid sequence, 489 residues long: Glutamate--tRNA ligase (489 aa).

The 'HIGH' region signature appears at 10 to 20; it reads PSPTGFLHIGG. Positions 261–265 match the 'KMSKS' region motif; the sequence is KLSKR. Lys264 provides a ligand contact to ATP.

This sequence belongs to the class-I aminoacyl-tRNA synthetase family. Glutamate--tRNA ligase type 1 subfamily. In terms of assembly, monomer.

It is found in the cytoplasm. The enzyme catalyses tRNA(Glu) + L-glutamate + ATP = L-glutamyl-tRNA(Glu) + AMP + diphosphate. In terms of biological role, catalyzes the attachment of glutamate to tRNA(Glu) in a two-step reaction: glutamate is first activated by ATP to form Glu-AMP and then transferred to the acceptor end of tRNA(Glu). The protein is Glutamate--tRNA ligase of Finegoldia magna (strain ATCC 29328 / DSM 20472 / WAL 2508) (Peptostreptococcus magnus).